The chain runs to 424 residues: S-phase kinase-associated protein 2 (424 aa).

Positions 1-220 (MHRKHLQEIP…LSLEGLRLSD (220 aa)) are mediates interaction with hepatitis C virus non-structural protein NS5A. The disordered stretch occupies residues 39–73 (SALEKEEPDSENIPQELLSNLGHPESPPRKRLKSK). A Phosphoserine modification is found at S64. Residues 67–73 (RKRLKSK) carry the Nuclear localization signal motif. N6-acetyllysine; by p300/EP300 occurs at positions 68 and 71. Residues S72 and S75 each carry the phosphoserine modification. An F-box domain is found at 94–140 (GVSWDSLPDELLLGIFSCLCLPELLKVSGVCKRWYRLASDESLWQTL). LRR repeat units follow at residues 151-176 (VTGRLLSQGVIAFRCPRSFMDQPLAE), 177-204 (HFSPFRVQHMDLSNSVIEVSTLHGILSQ), 210-234 (NLSLEGLRLSDPIVNTLAKNSNLVR), 235-257 (LNLSGCSGFSEFALQTLLSSCSR), 258-284 (LDELNLSWCFDFTEKHVQVAVAHVSET), 286-308 (TQLNLSGYRKNLQKSDLSTLVRR), 309-330 (CPNLVHLDLSDSVMLKNDCFQE), 334-356 (LNYLQHLSLSRCYDIIPETLLEL), 359-378 (IPTLKTLQVFGIVPDGTLQL), and 380-401 (KEALPHLQINCSHFTTIARPTI). S179 carries the post-translational modification Phosphoserine. The tract at residues 402 to 424 (GNKKNQEIWGIKCRLTLQKPSCL) is mediates interaction with IFI27.

As to quaternary structure, part of a SCF(SKP2) complex consisting of CUL1, RBX1, SKP1 and SKP2. Component of a SCF(SKP2)-like complex containing CUL1, SKP1, TRIM21 and SKP2. Interacts directly with CUL1 and SKP1. Interacts with CKS1. Interacts with ASB2 which is the substrate-recognition component of a probable ECS E3 ubiquitin-protein ligase complex; ASB2 is likely to bridge the formation of dimeric E3-ubiquitin-protein ligase complexes composed of an ECS complex and an SCF(SKP2) complex. Interacts with the cyclin-A-CDK2 complex. Interacts with ORC1, phosphorylated CDT1, phosphorylated RBL2, ELF4, phosphorylated RAG2, FOXO1, UBP43, MYC, TOB1, TAL1 and KMT2A/MLL1. Interacts with TRIM21. Interacts with cyclin-E. Interacts with IFI27; promotes the ubiquitin-mediated proteasomal degradation of hepatitis C virus/HCV non-structural protein NS5A. Interacts with CARM1. In terms of assembly, (Microbial infection) Interacts with hepatitis C virus/HCV non-structural protein NS5A; promotes the ubiquitin-mediated proteasomal degradation of NS5A. Phosphorylated on serine and threonine resudues in response to DNA damage, promoting 'Lys-63'-linked ubiquitination of NBN. Post-translationally, ubiquitinated by the APC/C complex, leading to its degradation by the proteasome. Deubiquitinated by USP13. In terms of processing, acetylation at Lys-68 and Lys-71 increases stability through impairment of APC/C-mediated proteolysis and promotes cytoplasmic retention. Deacetylated by SIRT3.

The protein resides in the cytoplasm. Its subcellular location is the nucleus. Its pathway is protein modification; protein ubiquitination. Functionally, substrate recognition component of a SCF (SKP1-CUL1-F-box protein) E3 ubiquitin-protein ligase complex which mediates the ubiquitination and subsequent proteasomal degradation of target proteins involved in cell cycle progression, signal transduction and transcription. Specifically recognizes phosphorylated CDKN1B/p27kip and is involved in regulation of G1/S transition. Degradation of CDKN1B/p27kip also requires CKS1. Recognizes target proteins ORC1, CDT1, RBL2, KMT2A/MLL1, CDK9, RAG2, NBN, FOXO1, UBP43, YTHDF2, and probably MYC, TOB1 and TAL1. Degradation of TAL1 also requires STUB1. Recognizes CDKN1A in association with CCNE1 or CCNE2 and CDK2. Promotes ubiquitination and destruction of CDH1 in a CK1-dependent manner, thereby regulating cell migration. Following phosphorylation in response to DNA damage, mediates 'Lys-63'-linked ubiquitination of NBN, promoting ATM recruitment to DNA damage sites and DNA repair via homologous recombination. Its function is as follows. Through the ubiquitin-mediated proteasomal degradation of hepatitis C virus non-structural protein 5A, has an antiviral activity towards that virus. The sequence is that of S-phase kinase-associated protein 2 (SKP2) from Homo sapiens (Human).